A 610-amino-acid polypeptide reads, in one-letter code: DNA replication regulator sld2 (610 aa).

Over residues Trp28–Ile42 the composition is skewed to basic and acidic residues. 3 disordered regions span residues Trp28 to Glu115, Ser127 to Val261, and Glu338 to Arg610. 2 stretches are compositionally biased toward polar residues: residues Glu86 to Tyr110 and Thr232 to Val261. 2 stretches are compositionally biased toward acidic residues: residues Val373–Ala386 and Phe414–Leu428. The span at Val442–Arg464 shows a compositional bias: basic residues. The span at Ala470–His480 shows a compositional bias: acidic residues. Residues Lys493–Leu503 are compositionally biased toward basic and acidic residues. A compositionally biased stretch (acidic residues) spans Glu514–Glu527. A compositionally biased stretch (basic and acidic residues) spans Ser544–Lys573.

Belongs to the SLD2 family.

It is found in the cytoplasm. Its subcellular location is the nucleus. Has a role in the initiation of DNA replication. Required at S-phase checkpoint. The protein is DNA replication regulator sld2 (drc-4) of Neurospora crassa (strain ATCC 24698 / 74-OR23-1A / CBS 708.71 / DSM 1257 / FGSC 987).